The chain runs to 98 residues: uncharacterized protein (98 aa).

Belongs to the IS150/IS1296 orfA family.

This is an uncharacterized protein from Haemophilus influenzae (strain ATCC 51907 / DSM 11121 / KW20 / Rd).